A 263-amino-acid polypeptide reads, in one-letter code: Ribonuclease HII (263 aa).

In terms of domain architecture, RNase H type-2 spans 71–262; the sequence is QAIAGIDEVG…VKSMCCNSTN (192 aa). Positions 77, 78, and 172 each coordinate a divalent metal cation.

The protein belongs to the RNase HII family. The cofactor is Mn(2+). Mg(2+) is required as a cofactor.

The protein resides in the cytoplasm. It catalyses the reaction Endonucleolytic cleavage to 5'-phosphomonoester.. In terms of biological role, endonuclease that specifically degrades the RNA of RNA-DNA hybrids. The polypeptide is Ribonuclease HII (Streptococcus pyogenes serotype M2 (strain MGAS10270)).